The chain runs to 875 residues: Probable inorganic carbon transporter subunit DabA (875 aa).

Residues Cys380, Asp382, His563, and Cys578 each contribute to the Zn(2+) site.

The protein belongs to the inorganic carbon transporter (TC 9.A.2) DabA family. In terms of assembly, forms a complex with DabB. Requires Zn(2+) as cofactor.

Its subcellular location is the cell membrane. In terms of biological role, part of an energy-coupled inorganic carbon pump. This Geobacillus thermodenitrificans (strain NG80-2) protein is Probable inorganic carbon transporter subunit DabA.